Consider the following 632-residue polypeptide: uncharacterized protein (632 aa).

It belongs to the MG032/MG096/MG288 family.

This is an uncharacterized protein from Mycoplasma pneumoniae (strain ATCC 29342 / M129 / Subtype 1) (Mycoplasmoides pneumoniae).